The chain runs to 147 residues: Protein-export protein SecB (147 aa).

The protein belongs to the SecB family. As to quaternary structure, homotetramer, a dimer of dimers. One homotetramer interacts with 1 SecA dimer.

It localises to the cytoplasm. Its function is as follows. One of the proteins required for the normal export of preproteins out of the cell cytoplasm. It is a molecular chaperone that binds to a subset of precursor proteins, maintaining them in a translocation-competent state. It also specifically binds to its receptor SecA. The protein is Protein-export protein SecB of Neisseria meningitidis serogroup A / serotype 4A (strain DSM 15465 / Z2491).